The primary structure comprises 412 residues: uncharacterized protein (412 aa).

3 disordered regions span residues 150–171, 177–196, and 302–412; these read NTPGSEQAQQQQQQQQQQQLGD, QITSSNNSGNSQQQQPQQQQ, and QAQQ…PLNP. Positions 156 to 168 are enriched in low complexity; it reads QAQQQQQQQQQQQ. Polar residues-rich tracts occupy residues 177-187 and 310-321; these read QITSSNNSGNS and MGSSPTHSSPTI. Positions 335 to 345 are enriched in low complexity; that stretch reads GGIINTNTNLN. Over residues 350–363 the composition is skewed to polar residues; the sequence is VSPNQPMPNSSPIL. 2 stretches are compositionally biased toward low complexity: residues 364 to 373 and 381 to 394; these read PTNASSVVPP and TSNNNSNNLGTTSP.

This is an uncharacterized protein from Dictyostelium discoideum (Social amoeba).